The primary structure comprises 132 residues: MQDFDFSFNPKACEGCGAKCCVGESGYIFLNIQEMQQISAFLKLELEEFSQKYVKKVGYKFSLLEKDAKELGLACVFLDLETKKCQIYSVRPKQCQTFPFWEGVKTFSKEQKEAFCQSCPGITQKTKETKVR.

The protein to M.jannaschii MJ0661.

This is an uncharacterized protein from Helicobacter pylori (strain ATCC 700392 / 26695) (Campylobacter pylori).